The chain runs to 893 residues: 26S proteasome non-ATPase regulatory subunit 2 (893 aa).

A disordered region spans residues 1 to 59; it reads MPQKEVTIPVPAKGGSNKEEDKKDNKDTEEKNTTTNTTTKDNKKDKKKDKKEETLSPED. Composition is skewed to basic and acidic residues over residues 16–32 and 40–59; these read SNKE…EEKN and KDNK…SPED. 7 PC repeats span residues 412–445, 446–482, 483–517, 522–555, 562–583, 666–700, and 701–735; these read STVA…HCSN, GALM…GTRI, SAIF…KMEF, GLAL…ASES, LGLG…ETLK, AIPL…EVAQ, and GAIL…DVHL.

Belongs to the proteasome subunit S2 family.

Functionally, acts as a regulatory subunit of the 26 proteasome which is involved in the ATP-dependent degradation of ubiquitinated proteins. This Dictyostelium discoideum (Social amoeba) protein is 26S proteasome non-ATPase regulatory subunit 2 (psmD2).